The chain runs to 432 residues: Heme-based aerotactic transducer HemAT (432 aa).

The Methyl-accepting transducer domain maps to 184 to 420; that stretch reads YNQTRDEQEE…EVSRAVSHVA (237 aa).

The protein belongs to the methyl-accepting chemotaxis (MCP) protein family. In terms of assembly, homotetramer.

Heme-containing signal transducer responsible for aerotaxis, the migratory response toward or away from oxygen. The polypeptide is Heme-based aerotactic transducer HemAT (hemAT) (Bacillus subtilis (strain 168)).